A 443-amino-acid chain; its full sequence is Probable glycine dehydrogenase (decarboxylating) subunit 1 (443 aa).

The protein belongs to the GcvP family. N-terminal subunit subfamily. As to quaternary structure, the glycine cleavage system is composed of four proteins: P, T, L and H. In this organism, the P 'protein' is a heterodimer of two subunits.

It carries out the reaction N(6)-[(R)-lipoyl]-L-lysyl-[glycine-cleavage complex H protein] + glycine + H(+) = N(6)-[(R)-S(8)-aminomethyldihydrolipoyl]-L-lysyl-[glycine-cleavage complex H protein] + CO2. Its function is as follows. The glycine cleavage system catalyzes the degradation of glycine. The P protein binds the alpha-amino group of glycine through its pyridoxal phosphate cofactor; CO(2) is released and the remaining methylamine moiety is then transferred to the lipoamide cofactor of the H protein. This is Probable glycine dehydrogenase (decarboxylating) subunit 1 from Desulfovibrio desulfuricans (strain ATCC 27774 / DSM 6949 / MB).